The sequence spans 421 residues: Histidine--tRNA ligase (421 aa).

This sequence belongs to the class-II aminoacyl-tRNA synthetase family.

It is found in the cytoplasm. The enzyme catalyses tRNA(His) + L-histidine + ATP = L-histidyl-tRNA(His) + AMP + diphosphate + H(+). This is Histidine--tRNA ligase from Pyrobaculum calidifontis (strain DSM 21063 / JCM 11548 / VA1).